The chain runs to 257 residues: Flagellar brake protein YcgR 1 (257 aa).

The span at 1-18 (MDTTQSNGQTDTQGQLHA) shows a compositional bias: polar residues. A disordered region spans residues 1–30 (MDTTQSNGQTDTQGQLHAQTAEGGNDFGRR). The PilZ domain occupies 133 to 246 (QRREYFRVDA…AENTLQRLIT (114 aa)).

Belongs to the YcgR family. In terms of assembly, monomer. Interacts with the flagellar basal bodies.

Its subcellular location is the bacterial flagellum basal body. Its function is as follows. Acts as a flagellar brake, regulating swimming and swarming in a bis-(3'-5') cyclic diguanylic acid (c-di-GMP)-dependent manner. Binds 1 c-di-GMP dimer per subunit. Increasing levels of c-di-GMP lead to decreased motility. In Paraburkholderia phytofirmans (strain DSM 17436 / LMG 22146 / PsJN) (Burkholderia phytofirmans), this protein is Flagellar brake protein YcgR 1.